Consider the following 479-residue polypeptide: Phosphatidylinositol 4-kinase type 2-alpha (479 aa).

The residue at position 1 (Met-1) is an N-acetylmethionine. The segment at 1–58 (MDETSPLVSPERAQPPEYTFPSGSGAHFPQVPGGAVRVAAAAGSGPSPPCSPGHDRER) is disordered. Ser-5, Ser-9, Ser-44, Ser-47, and Ser-51 each carry phosphoserine. Positions 31-45 (VPGGAVRVAAAAGSG) are enriched in low complexity. In terms of domain architecture, PI3K/PI4K catalytic spans 124–453 (SIYPERIYQG…VQMPPVIVET (330 aa)). The tract at residues 130–136 (IYQGSSG) is G-loop. Residues 131-137 (YQGSSGS) and Lys-152 contribute to the ATP site. An important for substrate binding region spans residues 157–159 (EPY). The important for interaction with membranes stretch occupies residues 165–178 (KWTKWLQKLCCPCC). 4 S-palmitoyl cysteine lipidation sites follow: Cys-174, Cys-175, Cys-177, and Cys-178. 261-264 (QLFV) contacts ATP. The segment at 268–276 (KDADYWLRR) is important for interaction with membranes. The tract at residues 305-313 (RNTDRGNDN) is catalytic loop. An activation loop region spans residues 344 to 364 (AIDNGLAFPLKHPDSWRAYPF). An ATP-binding site is contributed by Asp-346. The important for interaction with membranes stretch occupies residues 359 to 368 (WRAYPFYWAW). Phosphoserine is present on Ser-462.

It belongs to the PI3/PI4-kinase family. Type II PI4K subfamily. Associates with the BLOC-1 and the AP-3 complexes; the BLOC-1 complex is required for optimal binding of PI4K2A to the AP-3 complex. Interacts with BLOC1S5 and DTNBP1. Interacts with ITCH. Interacts with FOS; this interaction may enhance phosphatidylinositol phosphorylation activity. Interacts with ATG9A. Palmitoylated by ZDHHC3 and ZDHHC7 in the CCPCC motif. Palmitoylation is cholesterol-dependent, and required for TGN localization. Post-translationally, ubiquitinated by ITCH; this does not lead to proteasomal degradation. In terms of tissue distribution, detected in brain (at protein level).

It is found in the golgi apparatus. It localises to the trans-Golgi network membrane. The protein resides in the membrane raft. Its subcellular location is the endosome. The protein localises to the endosome membrane. It is found in the cytoplasmic vesicle. It localises to the cell projection. The protein resides in the dendrite. Its subcellular location is the presynaptic cell membrane. The protein localises to the synapse. It is found in the synaptosome. It localises to the mitochondrion. The protein resides in the membrane. Its subcellular location is the cell membrane. The protein localises to the perikaryon. It is found in the neuron projection. It catalyses the reaction a 1,2-diacyl-sn-glycero-3-phospho-(1D-myo-inositol) + ATP = a 1,2-diacyl-sn-glycero-3-phospho-(1D-myo-inositol 4-phosphate) + ADP + H(+). Membrane-bound phosphatidylinositol-4 kinase (PI4-kinase) that catalyzes the phosphorylation of phosphatidylinositol (PI) to phosphatidylinositol 4-phosphate (PI4P), a lipid that plays important roles in endocytosis, Golgi function, protein sorting and membrane trafficking and is required for prolonged survival of neurons. Besides, phosphorylation of phosphatidylinositol (PI) to phosphatidylinositol 4-phosphate (PI4P) is the first committed step in the generation of phosphatidylinositol 4,5-bisphosphate (PIP2), a precursor of the second messenger inositol 1,4,5-trisphosphate (InsP3). The sequence is that of Phosphatidylinositol 4-kinase type 2-alpha (Pi4k2a) from Mus musculus (Mouse).